We begin with the raw amino-acid sequence, 525 residues long: GMP synthase [glutamine-hydrolyzing] (525 aa).

A Glutamine amidotransferase type-1 domain is found at 9 to 207; sequence RILILDFGSQ…VRDICQCEAL (199 aa). Catalysis depends on C86, which acts as the Nucleophile. Catalysis depends on residues H181 and E183. The GMPS ATP-PPase domain maps to 208-400; sequence WTPAKIIDDA…LGLPYDMLYR (193 aa). ATP is bound at residue 235 to 241; the sequence is SGGVDSS.

In terms of assembly, homodimer.

It carries out the reaction XMP + L-glutamine + ATP + H2O = GMP + L-glutamate + AMP + diphosphate + 2 H(+). It functions in the pathway purine metabolism; GMP biosynthesis; GMP from XMP (L-Gln route): step 1/1. Catalyzes the synthesis of GMP from XMP. This chain is GMP synthase [glutamine-hydrolyzing], found in Klebsiella pneumoniae subsp. pneumoniae (strain ATCC 700721 / MGH 78578).